Reading from the N-terminus, the 279-residue chain is Small ribosomal subunit protein uS2 (279 aa).

This sequence belongs to the universal ribosomal protein uS2 family. In terms of assembly, component of the small ribosomal subunit. Mature ribosomes consist of a small (40S) and a large (60S) subunit. The 40S subunit contains about 33 different proteins and 1 molecule of RNA (18S). The 60S subunit contains about 49 different proteins and 3 molecules of RNA (25S, 5.8S and 5S). Interacts with ribosomal protein S21.

The protein localises to the cytoplasm. Its function is as follows. Required for the assembly and/or stability of the 40S ribosomal subunit. Required for the processing of the 20S rRNA-precursor to mature 18S rRNA in a late step of the maturation of 40S ribosomal subunits. In Chlamydomonas reinhardtii (Chlamydomonas smithii), this protein is Small ribosomal subunit protein uS2.